Reading from the N-terminus, the 746-residue chain is Methyl-CpG-binding domain-containing protein 13 (746 aa).

2 short sequence motifs (nuclear localization signal) span residues 13-20 and 44-51; these read ERKVEIRV and IKKLEITN. Positions 29-104 constitute an MBD domain; it reads VIVEKSAAQG…KESDIEDDDS (76 aa). Disordered regions lie at residues 131–157, 169–283, 295–328, 348–479, 518–562, and 696–746; these read IDDV…MTSD, LGKK…PTPE, PLDD…KTRT, TKVQ…LKSP, TAAG…SGSA, and EPDT…FSKD. The span at 169 to 180 shows a compositional bias: basic and acidic residues; that stretch reads LGKKEEVKDPIE. Positions 190–199 are enriched in polar residues; that stretch reads RSQTKASTTE. Basic and acidic residues predominate over residues 244–260; the sequence is SSEKRITRSKVEEKKNE. Positions 256-263 match the Nuclear localization signal motif; the sequence is EKKNELSN. A compositionally biased stretch (polar residues) spans 427 to 451; it reads VAQSCNEQSSQKPHAAAATSNNRVS. A compositionally biased stretch (basic residues) spans 465-476; that stretch reads VGRKPSKDKKTL. 2 stretches are compositionally biased toward polar residues: residues 529–546 and 702–730; these read PKAN…SPLR and KSQG…TNKT. Positions 732–746 are enriched in basic and acidic residues; it reads GKPDDLRFTQSFSKD.

Its subcellular location is the nucleus. In terms of biological role, probable transcriptional regulator. This is Methyl-CpG-binding domain-containing protein 13 (MBD13) from Arabidopsis thaliana (Mouse-ear cress).